The chain runs to 561 residues: MPQSKYRQQDIRAPRGTTLTAKSWLTEAPLRMLMNNLDPDVAENPHELVVYGGIGRAARDWECYDAIINALTKLEADETLLVQSGKPVGVFKTHENAPRVLIANSNLVPHWATWEHFNELDAKGLAMYGQMTAGSWIYIGSQGIVQGTYETFVEAGRQHYQGNLSGRWVLTAGLGGMGGAQPLAATLAGACSLNIECQQSRIDFRLRTRYVDEQATSLDDALARIEKYTREGKAVSVALCANAADVVPELVKRGVRPDLVTDQTSAHDPLHGYLPSGWRWEEYQAKAASDPQGTVQAAKRSMAKHVQAMLAFSEMGVPTFDYGNNIRQMAKEMGVENAFDFPGFVPAYIRPLFCRGIGPFRWVALSGDPEDIYKTDAKVKEIVADDKHLHHWLDMARERINFQGLPARICWVGLAWRQKLGLAFNEMVRRGEVSAPIVIGRDHLDSGSVASPNRETEAMRDGSDAVSDWPLLNALLNTASGATWVSLHHGGGVGMGFSQHAGMVIVCDGTDEAAARIARVLHNDPATGVMRHADAGYEIAVECAAEQGLNLPMIAATQGKR.

NAD(+) contacts are provided by residues 52–53 (GG), Gln130, 176–178 (GMG), Glu196, Arg201, 242–243 (NA), 263–267 (QTSAH), 273–274 (YL), and Tyr322. The active site involves Cys410. Residue Gly492 participates in NAD(+) binding.

Belongs to the urocanase family. NAD(+) serves as cofactor.

The protein localises to the cytoplasm. The enzyme catalyses 4-imidazolone-5-propanoate = trans-urocanate + H2O. It functions in the pathway amino-acid degradation; L-histidine degradation into L-glutamate; N-formimidoyl-L-glutamate from L-histidine: step 2/3. In terms of biological role, catalyzes the conversion of urocanate to 4-imidazolone-5-propionate. This chain is Urocanate hydratase, found in Citrobacter koseri (strain ATCC BAA-895 / CDC 4225-83 / SGSC4696).